A 214-amino-acid chain; its full sequence is EEF1A lysine methyltransferase 1 (214 aa).

The residue at position 2 (Ser-2) is an N-acetylserine. Ser-2 bears the Phosphoserine mark.

This sequence belongs to the class I-like SAM-binding methyltransferase superfamily. EFM5 family.

Its subcellular location is the cytoplasm. The enzyme catalyses L-lysyl-[protein] + 3 S-adenosyl-L-methionine = N(6),N(6),N(6)-trimethyl-L-lysyl-[protein] + 3 S-adenosyl-L-homocysteine + 3 H(+). In terms of biological role, protein N-lysine methyltransferase that selectively catalyzes the trimethylation of EEF1A at 'Lys-79'. This is EEF1A lysine methyltransferase 1 from Homo sapiens (Human).